Reading from the N-terminus, the 134-residue chain is MGARKHNSAEARKEALKQMYFAKLRNVPTSPRKMRLVADMIRGMEVNRALGVLKFSNKEASARVEKLLRSAVANWEEKNERKAEEGELFVSRICVDGASTLKRLRPAPQGRGYRIRKRSNHVTIYVDTLNNDNN.

The protein belongs to the universal ribosomal protein uL22 family. As to quaternary structure, part of the 50S ribosomal subunit.

Functionally, this protein binds specifically to 23S rRNA; its binding is stimulated by other ribosomal proteins, e.g. L4, L17, and L20. It is important during the early stages of 50S assembly. It makes multiple contacts with different domains of the 23S rRNA in the assembled 50S subunit and ribosome. The globular domain of the protein is located near the polypeptide exit tunnel on the outside of the subunit, while an extended beta-hairpin is found that lines the wall of the exit tunnel in the center of the 70S ribosome. The protein is Large ribosomal subunit protein uL22 of Porphyromonas gingivalis (strain ATCC 33277 / DSM 20709 / CIP 103683 / JCM 12257 / NCTC 11834 / 2561).